The chain runs to 132 residues: MGNDTIANIITSIRNADIVKKKTVRIIATNTTKNVVRILLQEGFIEDAREHREGQKSFSVLTLRYRGRKEKTYITTSKRTSKPGLRIYSNSQKVPKVLGGMGVVILSTSQGIMTDREARRRRIGGEILCYVR.

It belongs to the universal ribosomal protein uS8 family. In terms of assembly, part of the 30S ribosomal subunit.

Its subcellular location is the plastid. The protein resides in the chloroplast. In terms of biological role, one of the primary rRNA binding proteins, it binds directly to 16S rRNA central domain where it helps coordinate assembly of the platform of the 30S subunit. This is Small ribosomal subunit protein uS8c (rps8) from Cycas taitungensis (Prince sago).